Reading from the N-terminus, the 300-residue chain is UDP-N-acetylenolpyruvoylglucosamine reductase (300 aa).

Residues 28–193 (KTGGPADWLA…LDATFALKLG (166 aa)) enclose the FAD-binding PCMH-type domain. Arg172 is a catalytic residue. Ser222 functions as the Proton donor in the catalytic mechanism. Residue Glu292 is part of the active site.

Belongs to the MurB family. The cofactor is FAD.

Its subcellular location is the cytoplasm. The enzyme catalyses UDP-N-acetyl-alpha-D-muramate + NADP(+) = UDP-N-acetyl-3-O-(1-carboxyvinyl)-alpha-D-glucosamine + NADPH + H(+). The protein operates within cell wall biogenesis; peptidoglycan biosynthesis. Its function is as follows. Cell wall formation. The protein is UDP-N-acetylenolpyruvoylglucosamine reductase of Limosilactobacillus fermentum (strain NBRC 3956 / LMG 18251) (Lactobacillus fermentum).